The chain runs to 380 residues: Cytochrome b (380 aa).

Transmembrane regions (helical) follow at residues 34-54, 78-99, 114-134, and 179-199; these read FGSL…LLAM, WLIR…YLHI, WNTG…GYVL, and FFAL…IHLT. His84 and His98 together coordinate heme b. Residues His183 and His197 each contribute to the heme b site. His202 lines the a ubiquinone pocket. The next 4 membrane-spanning stretches (helical) occupy residues 227–247, 289–309, 321–341, and 348–368; these read LKDI…ALFS, LGGV…PLLH, LSQL…WIGS, and FIII…ILFP.

The protein belongs to the cytochrome b family. In terms of assembly, the cytochrome bc1 complex contains 11 subunits: 3 respiratory subunits (MT-CYB, CYC1 and UQCRFS1), 2 core proteins (UQCRC1 and UQCRC2) and 6 low-molecular weight proteins (UQCRH/QCR6, UQCRB/QCR7, UQCRQ/QCR8, UQCR10/QCR9, UQCR11/QCR10 and a cleavage product of UQCRFS1). This cytochrome bc1 complex then forms a dimer. Heme b is required as a cofactor.

It is found in the mitochondrion inner membrane. In terms of biological role, component of the ubiquinol-cytochrome c reductase complex (complex III or cytochrome b-c1 complex) that is part of the mitochondrial respiratory chain. The b-c1 complex mediates electron transfer from ubiquinol to cytochrome c. Contributes to the generation of a proton gradient across the mitochondrial membrane that is then used for ATP synthesis. The chain is Cytochrome b (MT-CYB) from Oceanodroma microsoma (Least storm petrel).